A 202-amino-acid polypeptide reads, in one-letter code: Guanylate kinase (202 aa).

In terms of domain architecture, Guanylate kinase-like spans 18-200 (LKPVVVFGPS…AYKQLEAICL (183 aa)). 25-32 (GPSGVGKS) is an ATP binding site.

Belongs to the guanylate kinase family.

It catalyses the reaction GMP + ATP = GDP + ADP. In terms of biological role, essential for recycling GMP and indirectly, cGMP. The chain is Guanylate kinase from Schizosaccharomyces pombe (strain 972 / ATCC 24843) (Fission yeast).